A 253-amino-acid polypeptide reads, in one-letter code: 5-oxoprolinase subunit A (253 aa).

Belongs to the LamB/PxpA family. As to quaternary structure, forms a complex composed of PxpA, PxpB and PxpC.

The catalysed reaction is 5-oxo-L-proline + ATP + 2 H2O = L-glutamate + ADP + phosphate + H(+). In terms of biological role, catalyzes the cleavage of 5-oxoproline to form L-glutamate coupled to the hydrolysis of ATP to ADP and inorganic phosphate. In Bacillus cereus (strain Q1), this protein is 5-oxoprolinase subunit A.